A 276-amino-acid chain; its full sequence is 4-deoxy-L-threo-5-hexosulose-uronate ketol-isomerase (276 aa).

Positions 194, 196, 201, and 243 each coordinate Zn(2+).

Belongs to the KduI family. Zn(2+) serves as cofactor.

The enzyme catalyses 5-dehydro-4-deoxy-D-glucuronate = 3-deoxy-D-glycero-2,5-hexodiulosonate. It functions in the pathway glycan metabolism; pectin degradation; 2-dehydro-3-deoxy-D-gluconate from pectin: step 4/5. In terms of biological role, catalyzes the isomerization of 5-dehydro-4-deoxy-D-glucuronate to 3-deoxy-D-glycero-2,5-hexodiulosonate. This Halalkalibacterium halodurans (strain ATCC BAA-125 / DSM 18197 / FERM 7344 / JCM 9153 / C-125) (Bacillus halodurans) protein is 4-deoxy-L-threo-5-hexosulose-uronate ketol-isomerase.